We begin with the raw amino-acid sequence, 147 residues long: Large ribosomal subunit protein bL9 (147 aa).

It belongs to the bacterial ribosomal protein bL9 family.

Binds to the 23S rRNA. The polypeptide is Large ribosomal subunit protein bL9 (Citrifermentans bemidjiense (strain ATCC BAA-1014 / DSM 16622 / JCM 12645 / Bem) (Geobacter bemidjiensis)).